The chain runs to 49 residues: Large ribosomal subunit protein bL33 (49 aa).

This sequence belongs to the bacterial ribosomal protein bL33 family.

The chain is Large ribosomal subunit protein bL33 (rpmG) from Thermotoga maritima (strain ATCC 43589 / DSM 3109 / JCM 10099 / NBRC 100826 / MSB8).